The chain runs to 272 residues: Phosphoribosylformylglycinamidine synthase subunit PurQ (272 aa).

A Glutamine amidotransferase type-1 domain is found at V8–E243. C98 acts as the Nucleophile in catalysis. Active-site residues include H225, E227, and E235.

Part of the FGAM synthase complex composed of 1 PurL, 1 PurQ and 2 PurS subunits.

The protein localises to the cytoplasm. The catalysed reaction is N(2)-formyl-N(1)-(5-phospho-beta-D-ribosyl)glycinamide + L-glutamine + ATP + H2O = 2-formamido-N(1)-(5-O-phospho-beta-D-ribosyl)acetamidine + L-glutamate + ADP + phosphate + H(+). It carries out the reaction L-glutamine + H2O = L-glutamate + NH4(+). It participates in purine metabolism; IMP biosynthesis via de novo pathway; 5-amino-1-(5-phospho-D-ribosyl)imidazole from N(2)-formyl-N(1)-(5-phospho-D-ribosyl)glycinamide: step 1/2. Functionally, part of the phosphoribosylformylglycinamidine synthase complex involved in the purines biosynthetic pathway. Catalyzes the ATP-dependent conversion of formylglycinamide ribonucleotide (FGAR) and glutamine to yield formylglycinamidine ribonucleotide (FGAM) and glutamate. The FGAM synthase complex is composed of three subunits. PurQ produces an ammonia molecule by converting glutamine to glutamate. PurL transfers the ammonia molecule to FGAR to form FGAM in an ATP-dependent manner. PurS interacts with PurQ and PurL and is thought to assist in the transfer of the ammonia molecule from PurQ to PurL. The polypeptide is Phosphoribosylformylglycinamidine synthase subunit PurQ (Methanococcus maripaludis (strain C7 / ATCC BAA-1331)).